The primary structure comprises 190 residues: UPF0340 protein BC_5317 (190 aa).

The protein belongs to the UPF0340 family.

This is UPF0340 protein BC_5317 from Bacillus cereus (strain ATCC 14579 / DSM 31 / CCUG 7414 / JCM 2152 / NBRC 15305 / NCIMB 9373 / NCTC 2599 / NRRL B-3711).